A 389-amino-acid chain; its full sequence is Chalcone synthase 1 (389 aa).

Cys-163 is a catalytic residue.

Belongs to the thiolase-like superfamily. Chalcone/stilbene synthases family.

It carries out the reaction (E)-4-coumaroyl-CoA + 3 malonyl-CoA + 3 H(+) = 2',4,4',6'-tetrahydroxychalcone + 3 CO2 + 4 CoA. The protein operates within secondary metabolite biosynthesis; flavonoid biosynthesis. The primary product of this enzyme is 4,2',4',6'-tetrahydroxychalcone (also termed naringenin-chalcone or chalcone) which can under specific conditions spontaneously isomerize into naringenin. The sequence is that of Chalcone synthase 1 (CHS1) from Citrus sinensis (Sweet orange).